We begin with the raw amino-acid sequence, 91 residues long: MKQLLASPSLQLVTYPASATAQSAEFASADCVTGLNEIGQISVSNISGDPQDVERIVALKADEQGASWYRIITMYEDQQPDNWRVQAILYA.

Residues Met1–Ala21 form the signal peptide.

The protein belongs to the BhsA/McbA family.

The protein localises to the periplasm. This is an uncharacterized protein from Escherichia coli O157:H7.